The chain runs to 121 residues: Holo-[acyl-carrier-protein] synthase (121 aa).

Asp8 and Glu55 together coordinate Mg(2+).

Belongs to the P-Pant transferase superfamily. AcpS family. Mg(2+) serves as cofactor.

The protein localises to the cytoplasm. The catalysed reaction is apo-[ACP] + CoA = holo-[ACP] + adenosine 3',5'-bisphosphate + H(+). In terms of biological role, transfers the 4'-phosphopantetheine moiety from coenzyme A to a Ser of acyl-carrier-protein. This Caldicellulosiruptor bescii (strain ATCC BAA-1888 / DSM 6725 / KCTC 15123 / Z-1320) (Anaerocellum thermophilum) protein is Holo-[acyl-carrier-protein] synthase.